Here is a 641-residue protein sequence, read N- to C-terminus: Chaperone protein DnaK (641 aa).

Thr199 carries the phosphothreonine; by autocatalysis modification. Residues 577–590 (KGDNKDEIETRTQK) are compositionally biased toward basic and acidic residues. Residues 577-641 (KGDNKDEIET…EFEEVDDKKK (65 aa)) form a disordered region. A compositionally biased stretch (low complexity) spans 617 to 626 (GAEQASAQQD). Positions 627 to 641 (DVVDAEFEEVDDKKK) are enriched in acidic residues.

Belongs to the heat shock protein 70 family.

In terms of biological role, acts as a chaperone. This chain is Chaperone protein DnaK, found in Thioalkalivibrio sulfidiphilus (strain HL-EbGR7).